A 539-amino-acid polypeptide reads, in one-letter code: Chaperonin GroEL (539 aa).

ATP-binding positions include T29–P32, D86–T90, G414, and D493.

This sequence belongs to the chaperonin (HSP60) family. Forms a cylinder of 14 subunits composed of two heptameric rings stacked back-to-back. Interacts with the co-chaperonin GroES.

Its subcellular location is the cytoplasm. It carries out the reaction ATP + H2O + a folded polypeptide = ADP + phosphate + an unfolded polypeptide.. Its function is as follows. Together with its co-chaperonin GroES, plays an essential role in assisting protein folding. The GroEL-GroES system forms a nano-cage that allows encapsulation of the non-native substrate proteins and provides a physical environment optimized to promote and accelerate protein folding. The polypeptide is Chaperonin GroEL (Staphylococcus aureus).